The following is a 77-amino-acid chain: ATP synthase subunit c (77 aa).

2 helical membrane passes run 10 to 30 and 57 to 77; these read IAVALLIGFGAIGTAVGFGNM and GLIDAVAMIGVGIAMVLLFVL.

The protein belongs to the ATPase C chain family. In terms of assembly, F-type ATPases have 2 components, F(1) - the catalytic core - and F(0) - the membrane proton channel. F(1) has five subunits: alpha(3), beta(3), gamma(1), delta(1), epsilon(1). F(0) has three main subunits: a(1), b(2) and c(10-14). The alpha and beta chains form an alternating ring which encloses part of the gamma chain. F(1) is attached to F(0) by a central stalk formed by the gamma and epsilon chains, while a peripheral stalk is formed by the delta and b chains.

It localises to the cell inner membrane. F(1)F(0) ATP synthase produces ATP from ADP in the presence of a proton or sodium gradient. F-type ATPases consist of two structural domains, F(1) containing the extramembraneous catalytic core and F(0) containing the membrane proton channel, linked together by a central stalk and a peripheral stalk. During catalysis, ATP synthesis in the catalytic domain of F(1) is coupled via a rotary mechanism of the central stalk subunits to proton translocation. Functionally, key component of the F(0) channel; it plays a direct role in translocation across the membrane. A homomeric c-ring of between 10-14 subunits forms the central stalk rotor element with the F(1) delta and epsilon subunits. This Pseudoalteromonas translucida (strain TAC 125) protein is ATP synthase subunit c.